The chain runs to 608 residues: X-ray repair cross-complementing protein 6 (608 aa).

The segment covering 1–11 (MSEWESYYKTE) has biased composition (basic and acidic residues). Positions 1–29 (MSEWESYYKTEGEEEEEEEESPDTGGEYK) are disordered. Position 2 is an N-acetylserine (S2). S2 is modified (phosphoserine). S6 is subject to Phosphoserine; by PRKDC. A compositionally biased stretch (acidic residues) spans 12-22 (GEEEEEEEESP). The active-site Schiff-base intermediate with DNA; for 5'-deoxyribose-5-phosphate lyase activity is K29. Position 29 is an N6-acetyllysine (K29). At S49 the chain carries Phosphoserine; by PRKDC. The region spanning 259–466 (FKLGEDVVLM…IDKMKAIVQK (208 aa)) is the Ku domain. The tract at residues 275–339 (VQKANKPFPV…EETEELKRFD (65 aa)) is DNA-binding. Residue K315 forms a Glycyl lysine isopeptide (Lys-Gly) (interchain with G-Cter in SUMO2) linkage. N6-acetyllysine occurs at positions 329, 336, and 459. The interval 371-480 (SLVSGSSTLF…YRSDSFENPV (110 aa)) is interaction with XRCC5. Residues S475, S518, and S548 each carry the phosphoserine modification. The segment at 534 to 557 (PEGKVAKRKQDDEGSTSKKPKVEL) is disordered. Basic and acidic residues predominate over residues 537 to 557 (KVAKRKQDDEGSTSKKPKVEL). Residues 548–607 (STSKKPKVELSEEELKAHFRKGTLGKLTVPTLKDICKAHGLKSGPKKQELLDALIRHLEK) are interaction with DEAF1. A Glycyl lysine isopeptide (Lys-Gly) (interchain with G-Cter in SUMO2) cross-link involves residue K554. S558 bears the Phosphoserine mark. N6,N6,N6-trimethyllysine is present on K568. Residues 571-605 (LGKLTVPTLKDICKAHGLKSGPKKQELLDALIRHL) form the SAP domain. The segment at 576–581 (VPTLKD) is interaction with BAX.

It belongs to the ku70 family. As to quaternary structure, heterodimer composed of XRCC5/Ku80 and XRCC6/Ku70. Component of the core long-range non-homologous end joining (NHEJ) complex (also named DNA-PK complex) composed of PRKDC, LIG4, XRCC4, XRCC6/Ku70, XRCC5/Ku86 and NHEJ1/XLF. Additional component of the NHEJ complex includes PAXX. Following autophosphorylation, PRKDC dissociates from DNA, leading to formation of the short-range NHEJ complex, composed of LIG4, XRCC4, XRCC6/Ku70, XRCC5/Ku86 and NHEJ1/XLF. The XRCC5-XRCC6 dimer also associates with NAA15, and this complex binds to the osteocalcin promoter and activates osteocalcin expression. In addition, XRCC6 interacts with the osteoblast-specific transcription factors MSX2, RUNX2 and DLX5. Interacts with ELF3. Interacts with ATP23. The XRCC5-XRRC6 dimer associates in a DNA-dependent manner with APEX1. Binds to CDK9. Identified in a complex with DEAF1 and XRCC5. Interacts with DEAF1 (via the SAND domain); the interaction is direct and may be inhibited by DNA-binding. Interacts with CLU. Interacts with NR4A3; the DNA-dependent protein kinase complex DNA-PK phosphorylates and activates NR4A3 and prevents NR4A3 ubiquitinylation and degradation. Interacts with CYREN (via KBM motif). Interacts (via N-terminus) with HSF1 (via N-terminus); this interaction is direct and prevents XRCC5/XRCC6 heterodimeric binding and non-homologous end joining (NHEJ) repair activities induced by ionizing radiation (IR). Part of the HDP-RNP complex composed of at least HEXIM1, PRKDC, XRCC5, XRCC6, paraspeckle proteins (SFPQ, NONO, PSPC1, RBM14, and MATR3) and NEAT1 RNA. Interacts with HMBOX1. Interacts with ATF7. Interacts with APLF (via KBM motif). Interacts with WRN (via KBM motif). The XRCC5-XRCC6 dimer associates with ALKBH2. Interacts with TPRN; TPRN interacts with a number of DNA damage response proteins, is recruited to sites of DNA damage and may play a role in DNA damage repair. When not acetylated, interacts with BAX. Interacts with ERCC6L2. Post-translationally, phosphorylation by PRKDC may enhance helicase activity. Phosphorylation of Ser-49 does not affect DNA repair. ADP-ribosylated by PARP3. In terms of processing, methylation by SETD4 leads to accumulation in the cytoplasm and is a prerequisite for acetylation, possibly due to the change of subcellular from the nucleus to the cytosol initiated by methylation, acetylation occurring in the cytosol. Post-translationally, acetylation can be catalyzed in vitro by CREBBP/CBP and KAT2B/PCAF.

The protein localises to the nucleus. It is found in the chromosome. It localises to the cytoplasm. In terms of biological role, single-stranded DNA-dependent ATP-dependent helicase that plays a key role in DNA non-homologous end joining (NHEJ) by recruiting DNA-PK to DNA. Required for double-strand break repair and V(D)J recombination. Also has a role in chromosome translocation. Has a role in chromosome translocation. The DNA helicase II complex binds preferentially to fork-like ends of double-stranded DNA in a cell cycle-dependent manner. It works in the 3'-5' direction. During NHEJ, the XRCC5-XRRC6 dimer performs the recognition step: it recognizes and binds to the broken ends of the DNA and protects them from further resection. Binding to DNA may be mediated by XRCC6. The XRCC5-XRRC6 dimer acts as a regulatory subunit of the DNA-dependent protein kinase complex DNA-PK by increasing the affinity of the catalytic subunit PRKDC to DNA by 100-fold. The XRCC5-XRRC6 dimer is probably involved in stabilizing broken DNA ends and bringing them together. The assembly of the DNA-PK complex to DNA ends is required for the NHEJ ligation step. Probably also acts as a 5'-deoxyribose-5-phosphate lyase (5'-dRP lyase), by catalyzing the beta-elimination of the 5' deoxyribose-5-phosphate at an abasic site near double-strand breaks. 5'-dRP lyase activity allows to 'clean' the termini of abasic sites, a class of nucleotide damage commonly associated with strand breaks, before such broken ends can be joined. The XRCC5-XRRC6 dimer together with APEX1 acts as a negative regulator of transcription. In association with NAA15, the XRCC5-XRRC6 dimer binds to the osteocalcin promoter and activates osteocalcin expression. Plays a role in the regulation of DNA virus-mediated innate immune response by assembling into the HDP-RNP complex, a complex that serves as a platform for IRF3 phosphorylation and subsequent innate immune response activation through the cGAS-STING pathway. Negatively regulates apoptosis by interacting with BAX and sequestering it from the mitochondria. Might have deubiquitination activity, acting on BAX. The protein is X-ray repair cross-complementing protein 6 (Xrcc6) of Mus musculus (Mouse).